We begin with the raw amino-acid sequence, 310 residues long: Homoserine kinase (310 aa).

Pro-91–Cys-101 is a binding site for ATP.

Belongs to the GHMP kinase family. Homoserine kinase subfamily.

The protein localises to the cytoplasm. It carries out the reaction L-homoserine + ATP = O-phospho-L-homoserine + ADP + H(+). It functions in the pathway amino-acid biosynthesis; L-threonine biosynthesis; L-threonine from L-aspartate: step 4/5. In terms of biological role, catalyzes the ATP-dependent phosphorylation of L-homoserine to L-homoserine phosphate. This is Homoserine kinase from Escherichia coli O157:H7.